The following is a 206-amino-acid chain: Ribosomal RNA small subunit methyltransferase G (206 aa).

S-adenosyl-L-methionine contacts are provided by residues glycine 73, leucine 78, valine 124–glutamate 125, and arginine 139.

The protein belongs to the methyltransferase superfamily. RNA methyltransferase RsmG family.

It localises to the cytoplasm. It catalyses the reaction guanosine(527) in 16S rRNA + S-adenosyl-L-methionine = N(7)-methylguanosine(527) in 16S rRNA + S-adenosyl-L-homocysteine. Its function is as follows. Specifically methylates the N7 position of guanine in position 527 of 16S rRNA. This chain is Ribosomal RNA small subunit methyltransferase G, found in Sodalis glossinidius (strain morsitans).